Here is a 695-residue protein sequence, read N- to C-terminus: Follicle-stimulating hormone receptor (695 aa).

A signal peptide spans 1–17; it reads MALLLVALLAFLSLGSG. 2 cysteine pairs are disulfide-bonded: C18–C25 and C23–C32. An LRRNT domain is found at 18-46; it reads CHHRLCHCSNGVFLCQESKVTEIPSDLPR. Over 18–366 the chain is Extracellular; sequence CHHRLCHCSN…EDIMGDDILR (349 aa). LRR repeat units lie at residues 49–72, 73–97, 98–118, 119–143, 144–169, 170–192, 193–216, 217–240, and 241–259; these read VELR…FGDL, EKIE…LPKL, HEIR…AFQN, LPNL…KIQS, LQKV…MGLS, FESM…AFNG, TQLD…VFQG, ASGP…GLEN, and LKKL…PSLE. Residues N191 and N199 are each glycosylated (N-linked (GlcNAc...) asparagine). 4 disulfide bridges follow: C275–C346, C276–C292, C276–C356, and C292–C338. N293 is a glycosylation site (N-linked (GlcNAc...) asparagine). Y335 is modified (sulfotyrosine). The chain crosses the membrane as a helical span at residues 367–387; the sequence is VLIWFISILAITGNILVLVIL. Topologically, residues 388–398 are cytoplasmic; the sequence is ITSQYKLTVPR. The helical transmembrane segment at 399–421 threads the bilayer; that stretch reads FLMCNLAFADLCIGIYLLLIASV. Over 422–443 the chain is Extracellular; it reads DVHTKTEYHNYAIDWQTGAGCD. C442 and C517 are joined by a disulfide. Residues 444-465 form a helical membrane-spanning segment; sequence AAGFFTVFASELSVYTLTAITL. The Cytoplasmic portion of the chain corresponds to 466–485; the sequence is ERWHTITHAMQLECKVQLRH. The helical transmembrane segment at 486–508 threads the bilayer; sequence AASIMLVGWIFAFAVALFPIFGI. At 509 to 528 the chain is on the extracellular side; it reads SSYMKVSICLPMDIDSPLSQ. The chain crosses the membrane as a helical span at residues 529–550; it reads LYVMSLLVLNVLAFVVICGCYT. The Cytoplasmic portion of the chain corresponds to 551-573; the sequence is HIYLTVRNPNITSSSSDTKIAKR. The helical transmembrane segment at 574–597 threads the bilayer; it reads MAMLIFTDFLCMAPISFFAISASL. Topologically, residues 598–608 are extracellular; the sequence is KVPLITVSKSK. A helical membrane pass occupies residues 609–630; the sequence is ILLVLFYPINSCANPFLYAIFT. Topologically, residues 631 to 695 are cytoplasmic; sequence KNFRRDFFIL…LIPLRHLAKN (65 aa).

It belongs to the G-protein coupled receptor 1 family. FSH/LSH/TSH subfamily. As to quaternary structure, homotrimer. Functions as a homotrimer binding the FSH hormone heterodimer composed of CGA and FSHB. Interacts with ARRB2. Interacts with APPL2; interaction is independent of follicle stimulating hormone stimulation. Post-translationally, N-glycosylated; indirectly required for FSH-binding, possibly via a conformational change that allows high affinity binding of hormone. Sulfated.

The protein localises to the cell membrane. Functionally, g protein-coupled receptor for follitropin, the follicle-stimulating hormone. Through cAMP production activates the downstream PI3K-AKT and ERK1/ERK2 signaling pathways. The polypeptide is Follicle-stimulating hormone receptor (FSHR) (Bos taurus (Bovine)).